The primary structure comprises 238 residues: Probable metal transport system ATP-binding protein TP_0035 (238 aa).

Residues Val10–Ala231 enclose the ABC transporter domain. Gly44–Ser51 provides a ligand contact to ATP.

This sequence belongs to the ABC transporter superfamily.

It localises to the cell inner membrane. In terms of biological role, part of an ATP-driven transport system TP_0034/TP_0035/TP_0036 for a metal. Probably responsible for energy coupling to the transport system. The polypeptide is Probable metal transport system ATP-binding protein TP_0035 (Treponema pallidum (strain Nichols)).